A 237-amino-acid polypeptide reads, in one-letter code: Protein-S-isoprenylcysteine O-methyltransferase (237 aa).

The next 4 membrane-spanning stretches (helical) occupy residues 26–46, 53–73, 92–112, and 116–136; these read SSAISCGLGIGIGFGIALFIF, FGIYLAGLCTFHMWEYIWVTM, FNMALLISFIEFWIEWYFFPS, and FSLWWVGAICMVFGQIVRSVA. S-adenosyl-L-methionine is bound by residues Q149, 156–159, Y164, and 169–172; these read HVLV and HPSY. Residues 184 to 204 form a helical membrane-spanning segment; sequence VILMNPISIIGFGWASWSFFS. R206 provides a ligand contact to substrate. Position 210 (E210) interacts with S-adenosyl-L-methionine.

Belongs to the class VI-like SAM-binding methyltransferase superfamily. Isoprenylcysteine carboxyl methyltransferase family.

It localises to the endoplasmic reticulum membrane. It catalyses the reaction [protein]-C-terminal S-[(2E,6E)-farnesyl]-L-cysteine + S-adenosyl-L-methionine = [protein]-C-terminal S-[(2E,6E)-farnesyl]-L-cysteine methyl ester + S-adenosyl-L-homocysteine. In terms of biological role, methylates the C-terminal cysteine residues of small GTPases and the heterotrimeric G protein gamma subunit in response to cAMP. The methylation is required for intercellular signaling and regulation of cAMP waves propagation. It also seems to induce the activity of car1, a G protein-coupled receptor which senses extracellular cAMP during the aggregation phase of development. This is Protein-S-isoprenylcysteine O-methyltransferase (icmt-1) from Dictyostelium discoideum (Social amoeba).